Consider the following 348-residue polypeptide: tRNA N6-adenosine threonylcarbamoyltransferase (348 aa).

Residues histidine 114 and histidine 118 each coordinate Fe cation. Substrate is bound by residues 137-141 (LVSGG), aspartate 171, glycine 184, aspartate 188, and asparagine 283. A Fe cation-binding site is contributed by aspartate 311.

The protein belongs to the KAE1 / TsaD family. Requires Fe(2+) as cofactor.

The protein resides in the cytoplasm. The enzyme catalyses L-threonylcarbamoyladenylate + adenosine(37) in tRNA = N(6)-L-threonylcarbamoyladenosine(37) in tRNA + AMP + H(+). Functionally, required for the formation of a threonylcarbamoyl group on adenosine at position 37 (t(6)A37) in tRNAs that read codons beginning with adenine. Is involved in the transfer of the threonylcarbamoyl moiety of threonylcarbamoyl-AMP (TC-AMP) to the N6 group of A37, together with TsaE and TsaB. TsaD likely plays a direct catalytic role in this reaction. The protein is tRNA N6-adenosine threonylcarbamoyltransferase of Nocardioides sp. (strain ATCC BAA-499 / JS614).